The following is a 599-amino-acid chain: Microtubule-associated protein 70-2 (599 aa).

Residues 1 to 30 (MADGGGGEEGSASALRGSARRRGAVQPAGL) form a disordered region. Residues 43-349 (DPVKVELNRL…ARSEAQLKEK (307 aa)) are a coiled coil. Positions 227-460 (ILDRLHRQKV…HLLNRSTDAV (234 aa)) are required for targeting to microtubules. Disordered regions lie at residues 357–453 (LEDG…PHLL) and 557–599 (AMRL…RNLQ). Positions 404-420 (RRSPSFNSRSSLSTSSS) are enriched in low complexity. The stretch at 533-570 (LTKAMEVEAKKMRREVAAMEKEVAAMRLDKDQENKAKR) forms a coiled coil. The span at 557–568 (AMRLDKDQENKA) shows a compositional bias: basic and acidic residues.

Belongs to the MAP70 family.

The protein localises to the cytoplasm. Its subcellular location is the cytoskeleton. Its function is as follows. Plant-specific protein that interact with microtubules. The sequence is that of Microtubule-associated protein 70-2 (MAP70.2) from Oryza sativa subsp. japonica (Rice).